The chain runs to 441 residues: uncharacterized protein (441 aa).

Transmembrane regions (helical) follow at residues Val21–Gly41, Leu51–Ile71, Ala94–Ser114, Val118–Ala138, Val150–Phe170, Ala195–Tyr215, Gln239–Gly259, Ser260–Trp280, Val291–Met311, Leu334–Phe354, Ile363–Gly383, and Val419–Met439.

The protein resides in the cell membrane. This is an uncharacterized protein from Vibrio parahaemolyticus serotype O3:K6 (strain RIMD 2210633).